The chain runs to 979 residues: MHC class II regulatory factor RFX1 (979 aa).

Disordered stretches follow at residues 1-136, 181-227, and 370-405; these read MATQ…QVVQ, QSAA…PTGT, and TSTG…STGG. Over residues 12–44 the composition is skewed to pro residues; the sequence is APPPSQPPQAPPQAQPQPPPPPPPAAPQPPQPP. Positions 45-73 are enriched in low complexity; sequence TAAATPQPQYVTELQSPQPQAQPPGGQKQ. Position 60 is a phosphoserine (serine 60). Positions 81–96 are enriched in pro residues; the sequence is VPAPSQPTGAPTPSPA. The segment covering 114 to 126 has biased composition (polar residues); sequence ETVSEASPGSTAS. Positions 127-136 are enriched in low complexity; sequence QTGVPTQVVQ. Polar residues-rich tracts occupy residues 190–203 and 209–220; these read GQVS…QQVH and SPVQANSSSSKT. Positions 370–379 are enriched in low complexity; the sequence is TSTGAGASNS. Gly residues predominate over residues 380 to 405; the sequence is SGGGGSGGGGGGGGGGGGGGSGSTGG. A DNA-binding region (RFX-type winged-helix) is located at residues 438–513; the sequence is TVQWLLDNYE…YHYYGLRIKA (76 aa). The interval 744–979 is necessary for dimerization; sequence FAQTLRRYTS…GLFVQALPSS (236 aa). A disordered region spans residues 915–960; the sequence is SLNPLDPDKDEEEEEEEESEDELPQDISLAAGGESPALGPETLEPP. A compositionally biased stretch (acidic residues) spans 922 to 938; that stretch reads DKDEEEEEEEESEDELP. Phosphoserine is present on residues serine 978 and serine 979.

The protein belongs to the RFX family. In terms of assembly, homodimer; binds DNA as a homodimer. Heterodimer; heterodimerizes with RFX2 and RFX3.

It is found in the nucleus. Functionally, regulatory factor essential for MHC class II genes expression. Binds to the X boxes of MHC class II genes. Also binds to an inverted repeat (ENH1) required for hepatitis B virus genes expression and to the most upstream element (alpha) of the RPL30 promoter. This chain is MHC class II regulatory factor RFX1 (RFX1), found in Homo sapiens (Human).